Reading from the N-terminus, the 592-residue chain is Glycosyltransferase 25 family member (592 aa).

Residues 1-13 form the signal peptide; sequence MLALLLTTTIVSG. N-linked (GlcNAc...) asparagine glycosylation is found at Asn249 and Asn510. 2 stretches are compositionally biased toward basic and acidic residues: residues 552-563 and 579-592; these read RIQEPKKGDKEQ and GEHD…RSEL. A disordered region spans residues 552 to 592; that stretch reads RIQEPKKGDKEQLPNAPALLSESGIGQGEHDLETKNRRSEL. The Prevents secretion from ER motif lies at 589–592; it reads RSEL.

The protein belongs to the glycosyltransferase 25 family.

The protein localises to the endoplasmic reticulum lumen. This is Glycosyltransferase 25 family member from Anopheles gambiae (African malaria mosquito).